A 156-amino-acid chain; its full sequence is Small ribosomal subunit protein uS7 (156 aa).

The protein belongs to the universal ribosomal protein uS7 family. As to quaternary structure, part of the 30S ribosomal subunit. Contacts proteins S9 and S11.

Functionally, one of the primary rRNA binding proteins, it binds directly to 16S rRNA where it nucleates assembly of the head domain of the 30S subunit. Is located at the subunit interface close to the decoding center, probably blocks exit of the E-site tRNA. The polypeptide is Small ribosomal subunit protein uS7 (Neisseria meningitidis serogroup C (strain 053442)).